The sequence spans 77 residues: U8-lycotoxin-Ls1s (77 aa).

The first 20 residues, 1–20 (MKLIIFTGLVLFAIVSLIEA), serve as a signal peptide directing secretion. Positions 21–26 (QAENER) are excised as a propeptide.

It belongs to the neurotoxin 19 (CSTX) family. 08 (U8-Lctx) subfamily. Contains 4 disulfide bonds. In terms of tissue distribution, expressed by the venom gland.

Its subcellular location is the secreted. The polypeptide is U8-lycotoxin-Ls1s (Lycosa singoriensis (Wolf spider)).